Here is a 403-residue protein sequence, read N- to C-terminus: Na(+)-translocating NADH-quinone reductase subunit B (403 aa).

A run of 9 helical transmembrane segments spans residues 56–76, 121–141, 164–184, 225–245, 260–280, 287–307, 312–332, 348–368, and 371–391; these read MMIIVWLCTFPAMFFGMYNVG, AYFLPVYLTTFIVGGFWEVLF, LPPSVPLWQVALGISFGVVLG, GFAGATSLSLAAAGGVDNILG, GSMGETSTLAIFIGGAVLLLT, IVAGVMLGMVAMSYLFNAIGS, MFAMPWYWHLVTGGFAFGMIF, WLFGALIGVMVMLIRVVNPAF, and GMMLAILFANLFAPLIDHFVV. At threonine 230 the chain carries FMN phosphoryl threonine.

This sequence belongs to the NqrB/RnfD family. As to quaternary structure, composed of six subunits; NqrA, NqrB, NqrC, NqrD, NqrE and NqrF. It depends on FMN as a cofactor.

Its subcellular location is the cell inner membrane. The catalysed reaction is a ubiquinone + n Na(+)(in) + NADH + H(+) = a ubiquinol + n Na(+)(out) + NAD(+). In terms of biological role, NQR complex catalyzes the reduction of ubiquinone-1 to ubiquinol by two successive reactions, coupled with the transport of Na(+) ions from the cytoplasm to the periplasm. NqrA to NqrE are probably involved in the second step, the conversion of ubisemiquinone to ubiquinol. This chain is Na(+)-translocating NADH-quinone reductase subunit B, found in Pseudomonas aeruginosa (strain LESB58).